The chain runs to 354 residues: Dual-specificity RNA methyltransferase RlmN (354 aa).

Catalysis depends on E89, which acts as the Proton acceptor. A Radical SAM core domain is found at 106 to 339 (KEAKYTVCVS…CTIRKSKGMD (234 aa)). The cysteines at positions 113 and 344 are disulfide-linked. [4Fe-4S] cluster contacts are provided by C120, C124, and C127. S-adenosyl-L-methionine is bound by residues 170 to 171 (GE), S202, 225 to 227 (SLH), and N301. C344 functions as the S-methylcysteine intermediate in the catalytic mechanism.

It belongs to the radical SAM superfamily. RlmN family. It depends on [4Fe-4S] cluster as a cofactor.

The protein resides in the cytoplasm. The enzyme catalyses adenosine(2503) in 23S rRNA + 2 reduced [2Fe-2S]-[ferredoxin] + 2 S-adenosyl-L-methionine = 2-methyladenosine(2503) in 23S rRNA + 5'-deoxyadenosine + L-methionine + 2 oxidized [2Fe-2S]-[ferredoxin] + S-adenosyl-L-homocysteine. It carries out the reaction adenosine(37) in tRNA + 2 reduced [2Fe-2S]-[ferredoxin] + 2 S-adenosyl-L-methionine = 2-methyladenosine(37) in tRNA + 5'-deoxyadenosine + L-methionine + 2 oxidized [2Fe-2S]-[ferredoxin] + S-adenosyl-L-homocysteine. Specifically methylates position 2 of adenine 2503 in 23S rRNA and position 2 of adenine 37 in tRNAs. m2A2503 modification seems to play a crucial role in the proofreading step occurring at the peptidyl transferase center and thus would serve to optimize ribosomal fidelity. This is Dual-specificity RNA methyltransferase RlmN from Nautilia profundicola (strain ATCC BAA-1463 / DSM 18972 / AmH).